A 77-amino-acid polypeptide reads, in one-letter code: Translation initiation factor IF-1, chloroplastic (77 aa).

Residues 1–71 (MKEQKLIHEG…TRGRIIYRLR (71 aa)) form the S1-like domain.

This sequence belongs to the IF-1 family. Component of the 30S ribosomal translation pre-initiation complex which assembles on the 30S ribosome in the order IF-2 and IF-3, IF-1 and N-formylmethionyl-tRNA(fMet); mRNA recruitment can occur at any time during PIC assembly.

It localises to the plastid. The protein localises to the chloroplast. Its function is as follows. One of the essential components for the initiation of protein synthesis. Stabilizes the binding of IF-2 and IF-3 on the 30S subunit to which N-formylmethionyl-tRNA(fMet) subsequently binds. Helps modulate mRNA selection, yielding the 30S pre-initiation complex (PIC). Upon addition of the 50S ribosomal subunit IF-1, IF-2 and IF-3 are released leaving the mature 70S translation initiation complex. This is Translation initiation factor IF-1, chloroplastic from Cabomba caroliniana (Carolina fanwort).